A 163-amino-acid polypeptide reads, in one-letter code: 2-C-methyl-D-erythritol 2,4-cyclodiphosphate synthase (163 aa).

The a divalent metal cation site is built by D12 and H14. 4-CDP-2-C-methyl-D-erythritol 2-phosphate contacts are provided by residues 12-14 (DVH) and 38-39 (HS). H46 provides a ligand contact to a divalent metal cation. 4-CDP-2-C-methyl-D-erythritol 2-phosphate is bound by residues 60–62 (DIG), 136–139 (TTSE), F143, and R146.

This sequence belongs to the IspF family. In terms of assembly, homotrimer. The cofactor is a divalent metal cation.

It carries out the reaction 4-CDP-2-C-methyl-D-erythritol 2-phosphate = 2-C-methyl-D-erythritol 2,4-cyclic diphosphate + CMP. It functions in the pathway isoprenoid biosynthesis; isopentenyl diphosphate biosynthesis via DXP pathway; isopentenyl diphosphate from 1-deoxy-D-xylulose 5-phosphate: step 4/6. In terms of biological role, involved in the biosynthesis of isopentenyl diphosphate (IPP) and dimethylallyl diphosphate (DMAPP), two major building blocks of isoprenoid compounds. Catalyzes the conversion of 4-diphosphocytidyl-2-C-methyl-D-erythritol 2-phosphate (CDP-ME2P) to 2-C-methyl-D-erythritol 2,4-cyclodiphosphate (ME-CPP) with a corresponding release of cytidine 5-monophosphate (CMP). This Xanthomonas oryzae pv. oryzae (strain MAFF 311018) protein is 2-C-methyl-D-erythritol 2,4-cyclodiphosphate synthase.